Here is a 145-residue protein sequence, read N- to C-terminus: 5-hydroxymethyl-dUMP N-hydrolase (145 aa).

8 residues coordinate 5-hydroxymethyl-dUMP: glycine 7, isoleucine 9, arginine 10, glycine 11, serine 79, glycine 81, glutamate 85, and serine 109.

Belongs to the 2'-deoxynucleoside 5'-phosphate N-hydrolase 1 family. As to quaternary structure, monomer and homodimer.

It is found in the cytoplasm. Its subcellular location is the nucleus. It carries out the reaction 5-hydroxymethyl-dUMP + H2O = 5-hydroxymethyluracil + 2-deoxy-D-ribose 5-phosphate. Functionally, part of a nucleotide salvage pathway that eliminates epigenetically modified 5-hydroxymethyl-dCMP (hmdCMP) in a two-step process entailing deamination to cytotoxic 5-hydroxymethyl-dUMP (hmdUMP), followed by its hydrolysis into 5-hydroxymethyluracil (hmU) and 2-deoxy-D-ribose 5-phosphate (deoxyribosephosphate). Catalyzes the second step in that pathway, the hydrolysis of the N-glycosidic bond in hmdUMP, degrading this cytotoxic nucleotide to avoid its genomic integration. The sequence is that of 5-hydroxymethyl-dUMP N-hydrolase from Esox lucius (Northern pike).